A 322-amino-acid polypeptide reads, in one-letter code: Pyrroline-5-carboxylate reductase (322 aa).

The next 2 helical transmembrane spans lie at 9–29 and 117–137; these read YPNVAILGCGKLGQALLVGLL and ILISLMGGVSPGLIVEALHFW. A disordered region spans residues 302–322; the sequence is LSQSAGSHGEDNTTDSKTSRA. N-linked (GlcNAc...) asparagine glycosylation occurs at asparagine 313.

The protein belongs to the pyrroline-5-carboxylate reductase family.

It is found in the membrane. The enzyme catalyses L-proline + NADP(+) = (S)-1-pyrroline-5-carboxylate + NADPH + 2 H(+). The catalysed reaction is L-proline + NAD(+) = (S)-1-pyrroline-5-carboxylate + NADH + 2 H(+). The protein operates within alkaloid biosynthesis. In terms of biological role, pyrroline-5-carboxylate reductase; part of the gene cluster that mediates the biosynthesis of paraherquamide, a fungal indole alkaloid that belongs to a family of natural products containing a characteristic bicyclo[2.2.2]diazaoctane core. The first steps in the biosynthesis of paraherquamide is the production of the beta-methyl-proline precursor from L-isoleucine. They require oxidation of a terminally hydroxylated L-isoleucine to the corresponding aldehyde by enzymes which have still to be identified. Spontaneous cyclization and dehydration would yield the 4-methyl pyrolline-5-carboxylic acid, which is then reduced by the pyrroline-5-carboxylate reductase phqD leading to the beta-methyl-proline precursor. The next step of paraherquamide biosynthesis involves coupling of beta-methyl-proline and L-tryptophan by the bimodular NRPS phqB, to produce a monooxopiperazine intermediate. The reductase (R) domain of phqB utilizes NADPH for hydride transfer to reduce the thioester bond of the T domain-tethered linear dipeptide to a hemithioaminal intermediate, which spontaneously cleaves the C-S bond to release the aldehyde product. This compound undergoes spontaneous cyclization and dehydration to give a dienamine which is reverse prenylated at C-2 by the reverse prenyltransferase phqJ. The other prenyltransferase present in the cluster, phqI may be a redundant gene in the pathway. During biosynthetic assembly, the key step to produce the polycyclic core is catalyzed by the bifunctional reductase and intramolecular [4+2] Diels-Alderase, phqE, resulting in formation of the [2.2.2] diazaoctane intermediate preparaherquamide. Following formation of preparaherquamide, an indole 2,3-epoxidation-initiated pinacol-like rearrangement is catalyzed by the phqK FAD-dependent monooxygenase. The prenyltransferase phqA, the cytochrome P450 monooxygenase phqL, and the FAD-linked oxidoreductase phqH (or the cytochrome P450 monooxygenase phqM), are proposed to be involved in the formation of the pyran ring. The FAD-dependent monooxygenase phqK is likely responsible for generation of the spiro-oxindole, and the N-methylation is likely mediated by the phqN methyltransferase leading to the isolable natural product paraherquamide F. However, the order of these biosynthetic steps has still to be determined. In late-stage paraherquamide biosynthesis, the third P450 monooxygenase, phqO, is probably responsible for the C-14 hydroxylation, transforming paraherquamide F to paraherquamide G, and paraherquamide E to the final product paraherquamide A. The expansion from the 6-membered ring pyran (in paraherquamides F and G) to the 7-membered dioxepin ring (in paraherquamides A and E) represents a poorly understood but intriguing process that probably involves the 2-oxoglutarate-dependent dioxygenase phqC. Finally, the remaining members of the paraherquamide cluster, including phqI as well as phqM (or phqH), do not have a clearly prescribed role and appear to be redundant. The sequence is that of Pyrroline-5-carboxylate reductase from Penicillium fellutanum.